The primary structure comprises 138 residues: Glutaredoxin-C7 (138 aa).

The disordered stretch occupies residues 17 to 40; that stretch reads SSTRGGGGGGMLGLTLFDPPGGEQ. A Glutaredoxin domain is found at 42 to 137; that stretch reads AERIGRLVRE…PRLREVGALC (96 aa). Cysteine 62 and cysteine 65 are joined by a disulfide.

It belongs to the glutaredoxin family. CC-type subfamily.

It is found in the cytoplasm. Its function is as follows. Has a glutathione-disulfide oxidoreductase activity in the presence of NADPH and glutathione reductase. Reduces low molecular weight disulfides and proteins. This Oryza sativa subsp. japonica (Rice) protein is Glutaredoxin-C7 (GRXC7).